The chain runs to 654 residues: Kelch-like protein 13 (654 aa).

The BTB domain occupies 91–160; it reads CDVTLMPGDT…IYTAKLSLNM (70 aa). In terms of domain architecture, BACK spans 195–296; that stretch reads CVEVGRIANT…TPQELINYVQ (102 aa). Kelch repeat units follow at residues 340–388, 389–440, 441–487, 489–534, 536–586, and 587–635; these read RLVT…VIGN, FLYV…ALKG, FLYA…VYGG, MYIS…TVGD, LYVI…VFEN, and KIYV…TLTV.

In terms of assembly, component of the BCR(KLHL9-KLHL13) E3 ubiquitin ligase complex, at least composed of CUL3, KLHL9, KLHL13 and RBX1. Interacts with AURKB.

It functions in the pathway protein modification; protein ubiquitination. Substrate-specific adapter of a BCR (BTB-CUL3-RBX1) E3 ubiquitin-protein ligase complex required for mitotic progression and cytokinesis. The BCR(KLHL9-KLHL13) E3 ubiquitin ligase complex mediates the ubiquitination of AURKB and controls the dynamic behavior of AURKB on mitotic chromosomes and thereby coordinates faithful mitotic progression and completion of cytokinesis. The chain is Kelch-like protein 13 (Klhl13) from Mus musculus (Mouse).